Reading from the N-terminus, the 590-residue chain is Glutamine--tRNA ligase (590 aa).

Residues 55–65 (PEPNGYLHIGH) carry the 'HIGH' region motif. ATP-binding positions include 56 to 58 (EPN) and 62 to 68 (HIGHAKS). Residues Asp-93 and Tyr-238 each contribute to the L-glutamine site. Residues Thr-257 and 292 to 293 (RL) each bind ATP. The 'KMSKS' region signature appears at 299–303 (ITSKR).

It belongs to the class-I aminoacyl-tRNA synthetase family. As to quaternary structure, monomer.

It localises to the cytoplasm. It carries out the reaction tRNA(Gln) + L-glutamine + ATP = L-glutaminyl-tRNA(Gln) + AMP + diphosphate. The protein is Glutamine--tRNA ligase of Polynucleobacter necessarius subsp. necessarius (strain STIR1).